A 242-amino-acid polypeptide reads, in one-letter code: Probable transcriptional regulatory protein XCV3282 (242 aa).

The protein belongs to the TACO1 family.

Its subcellular location is the cytoplasm. This is Probable transcriptional regulatory protein XCV3282 from Xanthomonas euvesicatoria pv. vesicatoria (strain 85-10) (Xanthomonas campestris pv. vesicatoria).